The primary structure comprises 173 residues: Cytochrome c-type biogenesis protein CcmE (173 aa).

Residues 1–8 lie on the Cytoplasmic side of the membrane; that stretch reads MMSRKKRR. The chain crosses the membrane as a helical; Signal-anchor for type II membrane protein span at residues 9–29; sequence LWIVIACGIGLSTAVALMLFA. Topologically, residues 30–173 are periplasmic; that stretch reads FRSSLSFFMS…PAQIEASNNG (144 aa). Residues His-127 and Tyr-131 each contribute to the heme site. Residues 145 to 173 form a disordered region; it reads KWNPKFGPPPNAGAWDDKSPAQIEASNNG.

This sequence belongs to the CcmE/CycJ family.

It is found in the cell inner membrane. Functionally, heme chaperone required for the biogenesis of c-type cytochromes. Transiently binds heme delivered by CcmC and transfers the heme to apo-cytochromes in a process facilitated by CcmF and CcmH. This Acidiphilium cryptum (strain JF-5) protein is Cytochrome c-type biogenesis protein CcmE.